Reading from the N-terminus, the 422-residue chain is MALQMKQSPSMGVRRASQPVLPPRPIVHRGVGSVSRRPAVVVKASLLDAASAASAVDAVHHATQLYTLAEGGPIDVLAQFFEFVLQTLDEGLESAKIPYSYGFAIIALTVLVKVATFPLTQKQVESTLSLQALQPRVKELQAKYADDPENLQLETARLYKEAGVNPLAGCFPTLATIPVFIGLYNALSNAAKEGLLTEGFFWIPSLGGPTTIGGGLEWLVPFENGAPPVGWANAAAYLVMPVLLVASQYASQKIISSQNNQDPSQQQAQAILKFLPLMIGWFSLNVPSGLTLYWFVNNLLSTGQQLYLKATVKVNIPEAIKAPATAGSSTPIVKPKEERVKKVTGKELGSRKKRRNDDGEEVEDVEVEVVSSGSSSSSGSNGASGRKGEKFRALKAREAAAKAASTVSAGAGGSEEGKDNSA.

The segment covering 1–10 (MALQMKQSPS) has biased composition (polar residues). The tract at residues 1-22 (MALQMKQSPSMGVRRASQPVLP) is disordered. Residues 65 to 85 (LYTLAEGGPIDVLAQFFEFVL) traverse the membrane as a helical segment. Topologically, residues 86 to 96 (QTLDEGLESAK) are stromal. A helical transmembrane segment spans residues 97 to 117 (IPYSYGFAIIALTVLVKVATF). At 118–166 (PLTQKQVESTLSLQALQPRVKELQAKYADDPENLQLETARLYKEAGVNP) the chain is on the lumenal side. The chain crosses the membrane as a helical span at residues 167 to 187 (LAGCFPTLATIPVFIGLYNAL). At 188–225 (SNAAKEGLLTEGFFWIPSLGGPTTIGGGLEWLVPFENG) the chain is on the stromal side. A helical membrane pass occupies residues 226-246 (APPVGWANAAAYLVMPVLLVA). Topologically, residues 247–275 (SQYASQKIISSQNNQDPSQQQAQAILKFL) are lumenal. A helical membrane pass occupies residues 276–296 (PLMIGWFSLNVPSGLTLYWFV). Residues 297–422 (NNLLSTGQQL…GSEEGKDNSA (126 aa)) lie on the Stromal side of the membrane. Residues 325-422 (TAGSSTPIVK…GSEEGKDNSA (98 aa)) form a disordered region. Residues 334–350 (KPKEERVKKVTGKELGS) are compositionally biased toward basic and acidic residues. Over residues 358 to 367 (DGEEVEDVEV) the composition is skewed to acidic residues. Residues 368–380 (EVVSSGSSSSSGS) show a composition bias toward low complexity. The span at 386–400 (RKGEKFRALKAREAA) shows a compositional bias: basic and acidic residues.

Belongs to the OXA1/ALB3/YidC (TC 2.A.9.2) family.

Its subcellular location is the plastid. It localises to the chloroplast thylakoid membrane. In terms of biological role, required for the insertion of some light-harvesting complexes (LHC) proteins into the chloroplast thylakoid membrane. Essential for the assembly and activity of LHC I and II. Its function is probably partly distinct from that of ALB3.1. The chain is Inner membrane ALBINO3-like protein 2, chloroplastic (ALB3.2) from Chlamydomonas reinhardtii (Chlamydomonas smithii).